Reading from the N-terminus, the 236-residue chain is Ribonuclease 3 (236 aa).

Residues F6–G140 enclose the RNase III domain. A Mg(2+)-binding site is contributed by E46. Residue D50 is part of the active site. Positions 126 and 129 each coordinate Mg(2+). The active site involves E129. The region spanning D166–D231 is the DRBM domain.

Belongs to the ribonuclease III family. Homodimer. Mg(2+) serves as cofactor.

It localises to the cytoplasm. It catalyses the reaction Endonucleolytic cleavage to 5'-phosphomonoester.. Functionally, digests double-stranded RNA. Involved in the processing of primary rRNA transcript to yield the immediate precursors to the large and small rRNAs (23S and 16S). Processes some mRNAs, and tRNAs when they are encoded in the rRNA operon. Processes pre-crRNA and tracrRNA of type II CRISPR loci if present in the organism. The polypeptide is Ribonuclease 3 (Ureaplasma parvum serovar 3 (strain ATCC 700970)).